A 180-amino-acid chain; its full sequence is ATP-dependent protease subunit HslV (180 aa).

Residue threonine 5 is part of the active site. Na(+) is bound by residues glycine 161, cysteine 164, and threonine 167.

It belongs to the peptidase T1B family. HslV subfamily. As to quaternary structure, a double ring-shaped homohexamer of HslV is capped on each side by a ring-shaped HslU homohexamer. The assembly of the HslU/HslV complex is dependent on binding of ATP.

Its subcellular location is the cytoplasm. It carries out the reaction ATP-dependent cleavage of peptide bonds with broad specificity.. Its activity is regulated as follows. Allosterically activated by HslU binding. Functionally, protease subunit of a proteasome-like degradation complex believed to be a general protein degrading machinery. The protein is ATP-dependent protease subunit HslV of Campylobacter jejuni subsp. jejuni serotype O:2 (strain ATCC 700819 / NCTC 11168).